The primary structure comprises 249 residues: Kallikrein-7 (249 aa).

Positions 1 to 21 (MGVWLLSLITVLLSLALETAG) are cleaved as a signal peptide. Positions 22 to 25 (QGER) are cleaved as a propeptide — activation peptide. The serine protease stretch occupies residues 26–246 (IIDGYKCKEG…YKRWVMETMK (221 aa)). Disulfide bonds link Cys-32–Cys-161, Cys-51–Cys-67, Cys-133–Cys-235, Cys-140–Cys-207, Cys-172–Cys-186, and Cys-197–Cys-222. Active-site charge relay system residues include His-66 and Asp-108. Ser-201 (charge relay system) is an active-site residue.

Belongs to the peptidase S1 family. Kallikrein subfamily. Expressed in skin and, at lower levels, in lung, kidney, brain, heart and spleen. In skin, expressed in high suprabasal keratinocytes and in the luminal parts of hair follicles. Not detected in liver and skeletal muscle.

Its subcellular location is the secreted. It catalyses the reaction Cleavage of proteins with aromatic side chains in the P1 position.. Inhibited by Zn2+ and Cu2+ at low micromolar concentrations. Inhibited by SERPINA12. May catalyze the degradation of intercellular cohesive structures in the cornified layer of the skin in the continuous shedding of cells from the skin surface. Specific for amino acid residues with aromatic side chains in the P1 position. Cleaves insulin A chain at '14-Tyr-|-Gln-15' and insulin B chain at '6-Leu-|-Cys-7', '16-Tyr-|-Leu-17', '25-Phe-|-Tyr-26' and '26-Tyr-|-Thr-27'. Could play a role in the activation of precursors to inflammatory cytokines. The chain is Kallikrein-7 (Klk7) from Mus musculus (Mouse).